A 432-amino-acid chain; its full sequence is Tol-Pal system protein TolB (432 aa).

An N-terminal signal peptide occupies residues 1–21 (MSTLIRIALFALALMAGAAQA).

Belongs to the TolB family. As to quaternary structure, the Tol-Pal system is composed of five core proteins: the inner membrane proteins TolA, TolQ and TolR, the periplasmic protein TolB and the outer membrane protein Pal. They form a network linking the inner and outer membranes and the peptidoglycan layer.

It is found in the periplasm. Its function is as follows. Part of the Tol-Pal system, which plays a role in outer membrane invagination during cell division and is important for maintaining outer membrane integrity. The chain is Tol-Pal system protein TolB from Pseudomonas aeruginosa (strain ATCC 15692 / DSM 22644 / CIP 104116 / JCM 14847 / LMG 12228 / 1C / PRS 101 / PAO1).